The chain runs to 172 residues: Shikimate kinase (172 aa).

11–16 (GSGKTT) is a binding site for ATP. Thr15 serves as a coordination point for Mg(2+). Substrate is bound by residues Asp33, Arg57, and Gly79. Arg117 contributes to the ATP binding site. Residue Arg136 participates in substrate binding.

It belongs to the shikimate kinase family. Monomer. The cofactor is Mg(2+).

Its subcellular location is the cytoplasm. It catalyses the reaction shikimate + ATP = 3-phosphoshikimate + ADP + H(+). The protein operates within metabolic intermediate biosynthesis; chorismate biosynthesis; chorismate from D-erythrose 4-phosphate and phosphoenolpyruvate: step 5/7. Catalyzes the specific phosphorylation of the 3-hydroxyl group of shikimic acid using ATP as a cosubstrate. The chain is Shikimate kinase from Caldicellulosiruptor bescii (strain ATCC BAA-1888 / DSM 6725 / KCTC 15123 / Z-1320) (Anaerocellum thermophilum).